A 92-amino-acid chain; its full sequence is Exodeoxyribonuclease 7 small subunit (92 aa).

Residues 71 to 84 show a composition bias toward low complexity; it reads AESAGTAKSAVAAD. A disordered region spans residues 71–92; the sequence is AESAGTAKSAVAADSRGAADSA.

The protein belongs to the XseB family. Heterooligomer composed of large and small subunits.

Its subcellular location is the cytoplasm. The catalysed reaction is Exonucleolytic cleavage in either 5'- to 3'- or 3'- to 5'-direction to yield nucleoside 5'-phosphates.. Functionally, bidirectionally degrades single-stranded DNA into large acid-insoluble oligonucleotides, which are then degraded further into small acid-soluble oligonucleotides. In Leifsonia xyli subsp. xyli (strain CTCB07), this protein is Exodeoxyribonuclease 7 small subunit.